The sequence spans 272 residues: Troponin T, fast skeletal muscle (272 aa).

Positions M1 to E50 are enriched in acidic residues. The segment at M1–K75 is disordered. S2 carries the post-translational modification N-acetylserine. A Phosphoserine modification is found at S2. Positions P63 to K75 are enriched in basic and acidic residues. S91 is modified (phosphoserine). Residues R114 to K156 show a composition bias toward basic and acidic residues. The interval R114 to L193 is disordered. Residues S162, S169, and S170 each carry the phosphoserine modification. The span at T184–L193 shows a compositional bias: basic and acidic residues. Position 206 is a phosphoserine (S206). Y222 is modified (phosphotyrosine). The disordered stretch occupies residues R248–K272.

It belongs to the troponin T family. Expressed predominantly in skeletal muscle.

Its function is as follows. Troponin T is the tropomyosin-binding subunit of troponin, the thin filament regulatory complex which confers calcium-sensitivity to striated muscle actomyosin ATPase activity. This Mus musculus (Mouse) protein is Troponin T, fast skeletal muscle (Tnnt3).